We begin with the raw amino-acid sequence, 432 residues long: Enolase (432 aa).

Glutamine 167 contributes to the (2R)-2-phosphoglycerate binding site. Catalysis depends on glutamate 209, which acts as the Proton donor. Mg(2+)-binding residues include aspartate 246, glutamate 290, and aspartate 317. (2R)-2-phosphoglycerate-binding residues include lysine 342, arginine 371, serine 372, and lysine 393. Lysine 342 functions as the Proton acceptor in the catalytic mechanism.

This sequence belongs to the enolase family. Component of the RNA degradosome, a multiprotein complex involved in RNA processing and mRNA degradation. Requires Mg(2+) as cofactor.

The protein localises to the cytoplasm. It localises to the secreted. Its subcellular location is the cell surface. It carries out the reaction (2R)-2-phosphoglycerate = phosphoenolpyruvate + H2O. The protein operates within carbohydrate degradation; glycolysis; pyruvate from D-glyceraldehyde 3-phosphate: step 4/5. Catalyzes the reversible conversion of 2-phosphoglycerate (2-PG) into phosphoenolpyruvate (PEP). It is essential for the degradation of carbohydrates via glycolysis. This is Enolase from Klebsiella pneumoniae subsp. pneumoniae (strain ATCC 700721 / MGH 78578).